Reading from the N-terminus, the 1097-residue chain is Cyclin-T (1097 aa).

Disordered stretches follow at residues 319-782 (SNIT…SNGI), 804-936 (LLKP…SLQA), and 985-1097 (AAPV…YNKK). The segment covering 332-350 (DSRDRDRDRERERERERDP) has biased composition (basic and acidic residues). 4 stretches are compositionally biased toward low complexity: residues 373–390 (SSSVSGVPGSSSSSSSSS), 420–456 (PSSHQRSSSSGLGSSGSGSQRSSSSSSSSSQQPGRPS), 467–478 (GMPPVGVGMPPH), and 489–511 (PQQPQQQPVPHPSASNSSASGMS). Residues 580 to 591 (LPYSQSQSYGHM) show a composition bias toward polar residues. Low complexity predominate over residues 592 to 606 (QQQPVPQSQQQQMPP). Residues 609 to 620 (SQHSLQSKNSLF) are compositionally biased toward polar residues. The span at 652–675 (HDYKLNSHPRDKESPKKERLTPTK) shows a compositional bias: basic and acidic residues. Residues 687-698 (GSGNSSSGSGSS) are compositionally biased toward low complexity. Positions 860 to 870 (GEIKEESSSKS) are enriched in basic and acidic residues. A compositionally biased stretch (basic residues) spans 871 to 883 (EKKKKKDKHKHKE). Positions 884-895 (KDKSKDKTEKEE) are enriched in basic and acidic residues. Phosphoserine is present on serine 916. A compositionally biased stretch (gly residues) spans 993–1007 (GAGGGGYSSSGGSSS). A compositionally biased stretch (basic and acidic residues) spans 1016–1031 (SDRDRDKESKKNKSQD). Residues 1037 to 1050 (GAGGGIFNPLGGAG) are compositionally biased toward gly residues. The span at 1087–1097 (APPPMPVYNKK) shows a compositional bias: pro residues.

The protein belongs to the cyclin family. Cyclin C subfamily. Component of the super elongation complex (SEC), at least composed of Ell, Cdk9, cyclin-T (CycT), lilli and ear. Associates with CDK9 to form P-TEFb.

It is found in the nucleus. Regulatory subunit of the cyclin-dependent kinase pair (CDK9/cyclin T) complex, also called positive transcription elongation factor B (P-TEFb), which is proposed to facilitate the transition from abortive to production elongation by phosphorylating the CTD (carboxy-terminal domain) of the large subunit of RNA polymerase II (RNAP II). This is Cyclin-T (CycT) from Drosophila melanogaster (Fruit fly).